The following is a 197-amino-acid chain: MNLVPTVIEQSSQGERAYDIYSRLLKDRIIMVSGEVNDDMANAIIAQLLFLDAQDSEKDIYMYINSPGGSVSAGLAIYDTMNFVNADVQTIVMGMAASMASVLATAGTKGKRFALPNSEIMIHQPLGGAQGQSTEIQIAAEHILKTRKLINQILADGSGQDIETINKDTERDNFMTAQQAVDYGLIDGIMKNKKKIK.

Ser98 functions as the Nucleophile in the catalytic mechanism. The active site involves His123.

This sequence belongs to the peptidase S14 family. In terms of assembly, fourteen ClpP subunits assemble into 2 heptameric rings which stack back to back to give a disk-like structure with a central cavity, resembling the structure of eukaryotic proteasomes.

Its subcellular location is the cytoplasm. It carries out the reaction Hydrolysis of proteins to small peptides in the presence of ATP and magnesium. alpha-casein is the usual test substrate. In the absence of ATP, only oligopeptides shorter than five residues are hydrolyzed (such as succinyl-Leu-Tyr-|-NHMec, and Leu-Tyr-Leu-|-Tyr-Trp, in which cleavage of the -Tyr-|-Leu- and -Tyr-|-Trp bonds also occurs).. Its function is as follows. Cleaves peptides in various proteins in a process that requires ATP hydrolysis. Has a chymotrypsin-like activity. Plays a major role in the degradation of misfolded proteins. The polypeptide is ATP-dependent Clp protease proteolytic subunit (Ligilactobacillus salivarius (strain UCC118) (Lactobacillus salivarius)).